Here is a 202-residue protein sequence, read N- to C-terminus: Glycerol-3-phosphate acyltransferase (202 aa).

Helical transmembrane passes span 11 to 31 (VLIAALVLGYACGAIPFGLIL), 87 to 107 (PALAAGLGAFLGHLFPVWLGF), 116 to 136 (FIGVLLALSPVTLAAFAAIWL), and 158 to 178 (LILWALGHGAVAALFLVLAAL).

This sequence belongs to the PlsY family. In terms of assembly, probably interacts with PlsX.

It is found in the cell inner membrane. The enzyme catalyses an acyl phosphate + sn-glycerol 3-phosphate = a 1-acyl-sn-glycero-3-phosphate + phosphate. It participates in lipid metabolism; phospholipid metabolism. Catalyzes the transfer of an acyl group from acyl-phosphate (acyl-PO(4)) to glycerol-3-phosphate (G3P) to form lysophosphatidic acid (LPA). This enzyme utilizes acyl-phosphate as fatty acyl donor, but not acyl-CoA or acyl-ACP. The chain is Glycerol-3-phosphate acyltransferase from Methylorubrum extorquens (strain PA1) (Methylobacterium extorquens).